Consider the following 357-residue polypeptide: Peptide chain release factor 1 (357 aa).

The residue at position 234 (Gln-234) is an N5-methylglutamine.

Belongs to the prokaryotic/mitochondrial release factor family. Post-translationally, methylated by PrmC. Methylation increases the termination efficiency of RF1.

The protein localises to the cytoplasm. In terms of biological role, peptide chain release factor 1 directs the termination of translation in response to the peptide chain termination codons UAG and UAA. This chain is Peptide chain release factor 1 (prfA), found in Lactococcus lactis subsp. lactis (strain IL1403) (Streptococcus lactis).